We begin with the raw amino-acid sequence, 347 residues long: NADH-ubiquinone oxidoreductase chain 2 (347 aa).

The next 9 membrane-spanning stretches (helical) occupy residues 5–22 (ILAI…MVLI), 26–45 (WLTI…PILM), 60–80 (FLTQ…NLLL), 150–170 (NPNL…WGGL), 178–198 (ILAY…TYNP), 200–220 (LMLL…MLFM), 237–257 (LPLI…LPPL), 274–294 (DMAI…YFYM), and 327–347 (PPLI…LTLF).

The protein belongs to the complex I subunit 2 family. In terms of assembly, core subunit of respiratory chain NADH dehydrogenase (Complex I) which is composed of 45 different subunits. Interacts with TMEM242.

It localises to the mitochondrion inner membrane. It carries out the reaction a ubiquinone + NADH + 5 H(+)(in) = a ubiquinol + NAD(+) + 4 H(+)(out). Core subunit of the mitochondrial membrane respiratory chain NADH dehydrogenase (Complex I) which catalyzes electron transfer from NADH through the respiratory chain, using ubiquinone as an electron acceptor. Essential for the catalytic activity and assembly of complex I. This is NADH-ubiquinone oxidoreductase chain 2 from Martes zibellina (Sable).